A 324-amino-acid polypeptide reads, in one-letter code: Esterase FPSE_08126 (324 aa).

Residues Ser156, Asp255, and His285 contribute to the active site.

It belongs to the AB hydrolase 3 family.

Functionally, esterase; part of the Fusarium detoxification of benzoxazolinone cluster involved in the degradation of benzoxazolinones produced by the host plant. Maize, wheat, and rye produce the 2 benzoxazinone phytoanticipins 2,4-dihy-droxy-7-methoxy-1,4-benzoxazin-3-one (DIMBOA) and 2,4-dihydroxy-1,4-benzoxazin-3-one (DIBOA) that, due to their inherent instability once released, spontaneously degrade to the more stable corresponding benzoxazolinones, 6-methoxy-2-benzoxazolinone (MBOA) and 2-benzoxazolinone (BOA), respectively. The first step in the detoxification of benzoxazolinones involves the hydrolysis of the cyclic ester bond of benzoxazolinones by the gamma-lactamase FDB1 to aminophenols. FDB1 is able to convert 2-benzoxazolinone (BOA) into 2-aminophenol (2-AP), as well as 6-methoxy-2-benzoxazolinone (MBOA) into 5-methoxy-2-aminophenol (2-AMP). The N-malonyltransferase FDB2 then metabolizes aminophenols via N-malonylation to non-toxic malonamic acids. FDB2 converts 2-AP into N-(2-hydroxyphenyl) malonamic acid (HPMA) and 2-AMP into N-(2-hydroxy-4-methoxyphenyl) malonamic acid (HMPMA). The cluster also contains 2 transcription factors (FDB3 and FPSE_08121), an aldo-keto reductase (FPSE_08125) that possibly associates with a ketone component of BOA and MBOA degradation, an esterase (FPSE_08126), an acyl-CoA transferase (FPSE_08120), a solute carrier protein (FPSE_08119) and a transmembrane transporter (FPSE_08127) proposed to shuttle metabolites of benzoxazolinone degradation. The sequence is that of Esterase FPSE_08126 from Fusarium pseudograminearum (strain CS3096) (Wheat and barley crown-rot fungus).